Here is a 79-residue protein sequence, read N- to C-terminus: MTDIIVTQTLNTIGLRCPEPIMLLRKKIRHMQEGETLLILADDPATTRDIPSFCQFMDHNLLKSDLENTPFKYWIKKGK.

Catalysis depends on Cys-17, which acts as the Cysteine persulfide intermediate.

Belongs to the sulfur carrier protein TusA family.

The protein resides in the cytoplasm. Sulfur carrier protein which probably makes part of a sulfur-relay system. This Histophilus somni (strain 129Pt) (Haemophilus somnus) protein is Sulfur carrier protein TusA.